Here is a 424-residue protein sequence, read N- to C-terminus: UDP-N-acetylglucosamine 1-carboxyvinyltransferase (424 aa).

22–23 (KN) contacts phosphoenolpyruvate. Residue R93 coordinates UDP-N-acetyl-alpha-D-glucosamine. Residue C117 is the Proton donor of the active site. 2-(S-cysteinyl)pyruvic acid O-phosphothioketal is present on C117. Residues 122 to 126 (RPVDL), 162 to 165 (KVSV), D307, and I329 contribute to the UDP-N-acetyl-alpha-D-glucosamine site.

Belongs to the EPSP synthase family. MurA subfamily.

The protein resides in the cytoplasm. The catalysed reaction is phosphoenolpyruvate + UDP-N-acetyl-alpha-D-glucosamine = UDP-N-acetyl-3-O-(1-carboxyvinyl)-alpha-D-glucosamine + phosphate. It participates in cell wall biogenesis; peptidoglycan biosynthesis. In terms of biological role, cell wall formation. Adds enolpyruvyl to UDP-N-acetylglucosamine. In Haemophilus influenzae (strain 86-028NP), this protein is UDP-N-acetylglucosamine 1-carboxyvinyltransferase.